The following is a 142-amino-acid chain: DNA-directed RNA polymerase II subunit RPB4 (142 aa).

The protein belongs to the eukaryotic RPB4 RNA polymerase subunit family. In terms of assembly, component of the RNA polymerase II (Pol II) core complex consisting of 12 subunits: a ten-subunit catalytic core composed of POLR2A/RPB1, POLR2B/RPB2, POLR2C/RPB3, POLR2I/RPB9, POLR2J/RPB11, POLR2E/RPABC1, POLR2F/RPABC2, POLR2H/RPABC3, POLR2K/RPABC4 and POLR2L/RPABC5 and a mobile stalk composed of two subunits POLR2D/RPB4 and POLR2G/RPB7, protruding from the core and functioning primarily in transcription initiation. Part of Pol II(G) complex, in which Pol II core associates with an additional subunit POLR2M; unlike conventional Pol II, Pol II(G) functions as a transcriptional repressor. Part of Pol II pre-initiation complex (PIC), in which Pol II core assembles with Mediator, general transcription factors and other specific initiation factors including GTF2E1, GTF2E2, GTF2F1, GTF2F2, TCEA1, ERCC2, ERCC3, GTF2H2, GTF2H3, GTF2H4, GTF2H5, GTF2A1, GTF2A2, GTF2B and TBP; this large multi-subunit PIC complex mediates DNA unwinding and targets Pol II core to the transcription start site where the first phosphodiester bond forms.

The protein resides in the nucleus. Functionally, core component of RNA polymerase II (Pol II), a DNA-dependent RNA polymerase which synthesizes mRNA precursors and many functional non-coding RNAs using the four ribonucleoside triphosphates as substrates. Pol II is the central component of the basal RNA polymerase II transcription machinery. It is composed of mobile elements that move relative to each other. POLR2D/RPB4 is part of a subcomplex with POLR2G/RPB7 that binds to a pocket formed by POLR2A/RPB1, POLR2B/RPB2 and POLR2F/RPABC2 at the base of the clamp element. The POLR2D/RPB4-POLR2G/RPB7 subcomplex seems to lock the clamp via POLR2G/RPB7 in the closed conformation thus preventing double-stranded DNA to enter the active site cleft. The POLR2D/RPB4-POLR2G/RPB7 subcomplex binds single-stranded DNA and RNA. The polypeptide is DNA-directed RNA polymerase II subunit RPB4 (POLR2D) (Bos taurus (Bovine)).